The primary structure comprises 317 residues: Melanocyte-stimulating hormone receptor (317 aa).

At 1-37 (MPVQGSQRRLLGSLNSTPTATPHLGLAANQTGARCLE) the chain is on the extracellular side. N-linked (GlcNAc...) asparagine glycosylation is present at N29. The chain crosses the membrane as a helical span at residues 38 to 63 (VSVPDGLFLSLGLVSLVENVLVVTAI). Residues 64–72 (AKNRNLHSP) are Cytoplasmic-facing. Residues 73-93 (MYCFICCLALSDLLVSGSNML) traverse the membrane as a helical segment. Topologically, residues 94–118 (ETAVTLLLEAGVLAARAAVVQQLDN) are extracellular. Residues 119-140 (VIDVITCSSMLSSLCFLGAIAV) form a helical membrane-spanning segment. Residues 141-163 (DRYISIFYALRYHSIVTLPRARR) lie on the Cytoplasmic side of the membrane. Residues 164–183 (AVAAIWVASVLFSTLFIAYY) form a helical membrane-spanning segment. The Extracellular portion of the chain corresponds to 184–191 (DHAAVLLC). Residues 192–211 (LVIFFLAMLVLMAVLYVHML) traverse the membrane as a helical segment. At 212-240 (ARACQHAQGIARLHKRQRLAHQGFGLKGA) the chain is on the cytoplasmic side. The helical transmembrane segment at 241-266 (ATLTILLGIFFLCWGPFFLHLTLIVL) threads the bilayer. The Extracellular portion of the chain corresponds to 267–279 (CPQHPTCSCIFKN). The chain crosses the membrane as a helical span at residues 280–300 (FNLFLALIICNAIIDPLIYAF). Residues 301–317 (RSQELRRTLKEVLLCSW) lie on the Cytoplasmic side of the membrane. A lipid anchor (S-palmitoyl cysteine) is attached at C315.

This sequence belongs to the G-protein coupled receptor 1 family. As to quaternary structure, interacts with MGRN1, but does not undergo MGRN1-mediated ubiquitination; this interaction competes with GNAS-binding and thus inhibits agonist-induced cAMP production. Interacts with OPN3; the interaction results in a decrease in MC1R-mediated cAMP signaling and ultimately a decrease in melanin production in melanocytes.

It localises to the cell membrane. Functionally, receptor for MSH (alpha, beta and gamma) and ACTH. The activity of this receptor is mediated by G proteins which activate adenylate cyclase. Mediates melanogenesis, the production of eumelanin (black/brown) and phaeomelanin (red/yellow), via regulation of cAMP signaling in melanocytes. The polypeptide is Melanocyte-stimulating hormone receptor (MC1R) (Papio anubis (Olive baboon)).